A 404-amino-acid chain; its full sequence is Phosphopentomutase (404 aa).

6 residues coordinate Mn(2+): aspartate 10, aspartate 303, histidine 308, aspartate 344, histidine 345, and histidine 356.

Belongs to the phosphopentomutase family. It depends on Mn(2+) as a cofactor.

The protein localises to the cytoplasm. It catalyses the reaction 2-deoxy-alpha-D-ribose 1-phosphate = 2-deoxy-D-ribose 5-phosphate. The enzyme catalyses alpha-D-ribose 1-phosphate = D-ribose 5-phosphate. The protein operates within carbohydrate degradation; 2-deoxy-D-ribose 1-phosphate degradation; D-glyceraldehyde 3-phosphate and acetaldehyde from 2-deoxy-alpha-D-ribose 1-phosphate: step 1/2. In terms of biological role, isomerase that catalyzes the conversion of deoxy-ribose 1-phosphate (dRib-1-P) and ribose 1-phosphate (Rib-1-P) to deoxy-ribose 5-phosphate (dRib-5-P) and ribose 5-phosphate (Rib-5-P), respectively. This chain is Phosphopentomutase, found in Shewanella sp. (strain ANA-3).